The following is a 105-amino-acid chain: Pyruvate synthase subunit PorD (105 aa).

4Fe-4S ferredoxin-type domains are found at residues 44-73 (FKPE…LDEE) and 74-103 (GYPV…MVRE). Residues Cys-53, Cys-56, Cys-59, Cys-63, Cys-83, Cys-86, Cys-89, and Cys-93 each coordinate [4Fe-4S] cluster.

In terms of assembly, heterotetramer of one alpha, one beta, one delta and one gamma chain. [4Fe-4S] cluster is required as a cofactor.

In Pyrococcus horikoshii (strain ATCC 700860 / DSM 12428 / JCM 9974 / NBRC 100139 / OT-3), this protein is Pyruvate synthase subunit PorD (porD).